A 363-amino-acid polypeptide reads, in one-letter code: Pyrimidine monooxygenase RutA (363 aa).

FMN contacts are provided by residues isoleucine 49 to lysine 50, asparagine 115, glutamate 124, arginine 140 to tyrosine 141, and serine 190.

The protein belongs to the NtaA/SnaA/DszA monooxygenase family. RutA subfamily.

It carries out the reaction uracil + FMNH2 + NADH + O2 = (Z)-3-ureidoacrylate + FMN + NAD(+) + H2O + H(+). It catalyses the reaction thymine + FMNH2 + NADH + O2 = (Z)-2-methylureidoacrylate + FMN + NAD(+) + H2O + H(+). In terms of biological role, catalyzes the pyrimidine ring opening between N-3 and C-4 by an unusual flavin hydroperoxide-catalyzed mechanism, adding oxygen atoms in the process to yield ureidoacrylate peracid, that immediately reacts with FMN forming ureidoacrylate and FMN-N(5)-oxide. The FMN-N(5)-oxide reacts spontaneously with NADH to produce FMN. Requires the flavin reductase RutF to regenerate FMN in vivo. This chain is Pyrimidine monooxygenase RutA, found in Escherichia coli O127:H6 (strain E2348/69 / EPEC).